The following is a 596-amino-acid chain: uncharacterized protein (596 aa).

The helical transmembrane segment at 7–26 (FWPILLGFTVLVAAGLYYVV) threads the bilayer.

It is found in the membrane. This is an uncharacterized protein from Sinorhizobium fredii (strain NBRC 101917 / NGR234).